Reading from the N-terminus, the 4743-residue chain is Apolipoprotein B-100 (4743 aa).

Positions 1 to 27 are cleaved as a signal peptide; sequence MGPQRPALRAPLLLLFLLLFLDTSVWA. A heparin-binding region spans residues 29–113; that stretch reads DATRFKHLRK…KNSEEFASAM (85 aa). The Vitellogenin domain maps to 33–660; it reads FKHLRKYVYS…PSSYLPKESM (628 aa). Cysteines 65 and 84 form a disulfide. N172 carries N-linked (GlcNAc...) asparagine glycosylation. Disulfide bonds link C173–C199, C232–C248, C372–C377, and C466–C501. The interval 219–293 is heparin-binding; it reads VRPLSTLISS…RFFRGGINQV (75 aa). The interval 890-947 is heparin-binding; the sequence is NTNFFHESGLEARVALKAGQLKVIIPSPKRPVKLFSGSNTLHLVSTTKTEVIPPLIEN. A disulfide bridge links C954 with C964. N971, N1336, N1345, and N1491 each carry an N-linked (GlcNAc...) asparagine glycan. The residue at position 1973 (K1973) is an N6-acetyllysine. S2006 is modified (phosphoserine). The segment at 2010–2145 is heparin-binding; that stretch reads NDAFDEPREF…EKLSQLETYA (136 aa). 8 N-linked (GlcNAc...) asparagine glycosylation sites follow: N2094, N2522, N2662, N2741, N2791, N2897, N2944, and N3063. The tract at residues 3123 to 3198 is heparin-binding; sequence FLKTTKQSFD…KIKFDKYKTE (76 aa). Residues 3136-3146 are basic (possible receptor binding region); sequence KAQYKKNRDKH. N-linked (GlcNAc...) asparagine glycosylation is found at N3186, N3299, and N3321. The segment at 3336–3356 is LDL receptor binding; it reads VTDALQYKLEGTSRLMRKKVL. The tract at residues 3346 to 3479 is heparin-binding; sequence GTSRLMRKKV…QEYSGSVANE (134 aa). The segment at 3349-3357 is basic (possible receptor binding region); the sequence is RLMRKKVLK. 3 N-linked (GlcNAc...) asparagine glycosylation sites follow: N3428, N3715, and N3828. Phosphoserine is present on S3981. Phosphothreonine is present on T3985. N-linked (GlcNAc...) asparagine glycans are attached at residues N4203 and N4232.

Interacts with PCSK9. Interacts with MTTP. Interacts with AUP1. Interacts with CIDEB. In terms of processing, palmitoylated; structural requirement for proper assembly of the hydrophobic core of the lipoprotein particle. In terms of tissue distribution, detected in intestine and liver (at protein level).

The protein localises to the cytoplasm. It localises to the secreted. Its subcellular location is the lipid droplet. Functionally, apolipoprotein B is a major protein constituent of chylomicrons (apo B-48), LDL (apo B-100) and VLDL (apo B-100). Apo B-100 functions as a recognition signal for the cellular binding and internalization of LDL particles by the apoB/E receptor. This Rattus norvegicus (Rat) protein is Apolipoprotein B-100 (Apob).